Reading from the N-terminus, the 571-residue chain is Proline--tRNA ligase (571 aa).

Belongs to the class-II aminoacyl-tRNA synthetase family. ProS type 1 subfamily. In terms of assembly, homodimer.

It is found in the cytoplasm. The enzyme catalyses tRNA(Pro) + L-proline + ATP = L-prolyl-tRNA(Pro) + AMP + diphosphate. Functionally, catalyzes the attachment of proline to tRNA(Pro) in a two-step reaction: proline is first activated by ATP to form Pro-AMP and then transferred to the acceptor end of tRNA(Pro). As ProRS can inadvertently accommodate and process non-cognate amino acids such as alanine and cysteine, to avoid such errors it has two additional distinct editing activities against alanine. One activity is designated as 'pretransfer' editing and involves the tRNA(Pro)-independent hydrolysis of activated Ala-AMP. The other activity is designated 'posttransfer' editing and involves deacylation of mischarged Ala-tRNA(Pro). The misacylated Cys-tRNA(Pro) is not edited by ProRS. The polypeptide is Proline--tRNA ligase (Syntrophotalea carbinolica (strain DSM 2380 / NBRC 103641 / GraBd1) (Pelobacter carbinolicus)).